The primary structure comprises 286 residues: 4-diphosphocytidyl-2-C-methyl-D-erythritol kinase (286 aa).

Lys-12 is an active-site residue. Residue 96 to 106 (PHGAGLGGGSA) coordinates ATP. The active site involves Asp-138.

The protein belongs to the GHMP kinase family. IspE subfamily.

It carries out the reaction 4-CDP-2-C-methyl-D-erythritol + ATP = 4-CDP-2-C-methyl-D-erythritol 2-phosphate + ADP + H(+). The protein operates within isoprenoid biosynthesis; isopentenyl diphosphate biosynthesis via DXP pathway; isopentenyl diphosphate from 1-deoxy-D-xylulose 5-phosphate: step 3/6. Catalyzes the phosphorylation of the position 2 hydroxy group of 4-diphosphocytidyl-2C-methyl-D-erythritol. The chain is 4-diphosphocytidyl-2-C-methyl-D-erythritol kinase from Nitratidesulfovibrio vulgaris (strain ATCC 29579 / DSM 644 / CCUG 34227 / NCIMB 8303 / VKM B-1760 / Hildenborough) (Desulfovibrio vulgaris).